The following is a 243-amino-acid chain: 35 kDa gas vesicle protein (243 aa).

The protein belongs to the gas vesicle GvpC family.

It localises to the gas vesicle shell. May confer stability to the gas vesicle shells. Gas vesicles are small, hollow, gas filled protein structures that are found in several microbial planktonic microorganisms. They allow the positioning of the organism at the favorable depth for growth. This Dactylococcopsis salina (strain PCC 8305) (Myxobactron salinum) protein is 35 kDa gas vesicle protein.